The chain runs to 311 residues: uncharacterized protein (311 aa).

This is an uncharacterized protein from Bacillus anthracis.